The sequence spans 365 residues: tRNA-specific 2-thiouridylase MnmA (365 aa).

Residues 14–21 (AMSGGVDS) and Leu40 contribute to the ATP site. Cys108 acts as the Nucleophile in catalysis. Cys108 and Cys204 are joined by a disulfide. Residue Gly132 participates in ATP binding. Residues 154 to 156 (KDQ) are interaction with tRNA. Cys204 functions as the Cysteine persulfide intermediate in the catalytic mechanism.

The protein belongs to the MnmA/TRMU family.

It is found in the cytoplasm. It carries out the reaction S-sulfanyl-L-cysteinyl-[protein] + uridine(34) in tRNA + AH2 + ATP = 2-thiouridine(34) in tRNA + L-cysteinyl-[protein] + A + AMP + diphosphate + H(+). Functionally, catalyzes the 2-thiolation of uridine at the wobble position (U34) of tRNA, leading to the formation of s(2)U34. In Rickettsia peacockii (strain Rustic), this protein is tRNA-specific 2-thiouridylase MnmA.